A 504-amino-acid chain; its full sequence is Amyloid-beta A4 precursor protein-binding family B member 3 (504 aa).

Positions 29-61 (TGLPPGWRKIRDAAGTYYWHVPSGSTQWQRPTW) constitute a WW domain. 2 PID domains span residues 111 to 278 (EPGA…QVEL) and 283 to 438 (SQAA…RTSS).

Interacts with APP (via intracellular domain). Interacts with APLP1 and APLP2 (via intracellular domain). Expressed predominantly in brain and testis.

The protein resides in the cytoplasm. It localises to the nucleus. In terms of biological role, may modulate the internalization of amyloid-beta precursor protein. The chain is Amyloid-beta A4 precursor protein-binding family B member 3 from Rattus norvegicus (Rat).